The chain runs to 201 residues: Proteasome subunit beta type-2 (201 aa).

Position 1 is an N-acetylmethionine (methionine 1).

This sequence belongs to the peptidase T1B family. In terms of assembly, the 26S proteasome consists of a 20S proteasome core and two 19S regulatory subunits. The 20S proteasome core is a barrel-shaped complex made of 28 subunits that are arranged in four stacked rings. The two outer rings are each formed by seven alpha subunits, and the two inner rings are formed by seven beta subunits. The proteolytic activity is exerted by three beta-subunits PSMB5, PSMB6 and PSMB7. (Microbial infection) Interacts with HIV-1 protein Tat.

Its subcellular location is the cytoplasm. The protein resides in the nucleus. In terms of biological role, non-catalytic component of the 20S core proteasome complex involved in the proteolytic degradation of most intracellular proteins. This complex plays numerous essential roles within the cell by associating with different regulatory particles. Associated with two 19S regulatory particles, forms the 26S proteasome and thus participates in the ATP-dependent degradation of ubiquitinated proteins. The 26S proteasome plays a key role in the maintenance of protein homeostasis by removing misfolded or damaged proteins that could impair cellular functions, and by removing proteins whose functions are no longer required. Associated with the PA200 or PA28, the 20S proteasome mediates ubiquitin-independent protein degradation. This type of proteolysis is required in several pathways including spermatogenesis (20S-PA200 complex) or generation of a subset of MHC class I-presented antigenic peptides (20S-PA28 complex). In Homo sapiens (Human), this protein is Proteasome subunit beta type-2.